The chain runs to 204 residues: Methylthioribulose-1-phosphate dehydratase (204 aa).

H96 and H98 together coordinate Zn(2+).

Belongs to the aldolase class II family. MtnB subfamily. Requires Zn(2+) as cofactor.

It catalyses the reaction 5-(methylsulfanyl)-D-ribulose 1-phosphate = 5-methylsulfanyl-2,3-dioxopentyl phosphate + H2O. Its pathway is amino-acid biosynthesis; L-methionine biosynthesis via salvage pathway; L-methionine from S-methyl-5-thio-alpha-D-ribose 1-phosphate: step 2/6. Its function is as follows. Catalyzes the dehydration of methylthioribulose-1-phosphate (MTRu-1-P) into 2,3-diketo-5-methylthiopentyl-1-phosphate (DK-MTP-1-P). This is Methylthioribulose-1-phosphate dehydratase from Methylococcus capsulatus (strain ATCC 33009 / NCIMB 11132 / Bath).